A 480-amino-acid polypeptide reads, in one-letter code: Sialyltransferase-like protein 5 (480 aa).

Residues 1 to 17 (MARAPPPLSSLPPPPRR) are Cytoplasmic-facing. Residues 18–38 (PTVVLLLGLALAFCLAVLSIQ) form a signal-anchor for type II membrane protein membrane-spanning segment. Residues 39-480 (SSFFTAPRLA…VCVRHERSSS (442 aa)) are Lumenal-facing. 4 N-linked (GlcNAc...) asparagine glycosylation sites follow: asparagine 98, asparagine 130, asparagine 165, and asparagine 321.

The protein belongs to the glycosyltransferase 29 family.

It localises to the golgi apparatus membrane. Its function is as follows. May possess sialyltransferase-like activity in vitro. This Oryza sativa subsp. japonica (Rice) protein is Sialyltransferase-like protein 5.